Consider the following 147-residue polypeptide: UPF0178 protein CV_1768 (147 aa).

It belongs to the UPF0178 family.

The sequence is that of UPF0178 protein CV_1768 from Chromobacterium violaceum (strain ATCC 12472 / DSM 30191 / JCM 1249 / CCUG 213 / NBRC 12614 / NCIMB 9131 / NCTC 9757 / MK).